The chain runs to 556 residues: Formate--tetrahydrofolate ligase (556 aa).

65-72 (TPAGEGKT) contacts ATP.

It belongs to the formate--tetrahydrofolate ligase family.

It catalyses the reaction (6S)-5,6,7,8-tetrahydrofolate + formate + ATP = (6R)-10-formyltetrahydrofolate + ADP + phosphate. Its pathway is one-carbon metabolism; tetrahydrofolate interconversion. The protein is Formate--tetrahydrofolate ligase of Ruminiclostridium cellulolyticum (strain ATCC 35319 / DSM 5812 / JCM 6584 / H10) (Clostridium cellulolyticum).